Consider the following 653-residue polypeptide: Intermembrane lipid transfer protein vps13l (653 aa).

The B box-type zinc-finger motif lies at 5-49 (ISELKCQQHDKLVTIYCCACDAYFCKKCDKEKHSQDDNQEDSLHI). Positions 10, 13, 32, and 37 each coordinate Zn(2+). 3 disordered regions span residues 159–232 (NLID…NRKK), 248–420 (HILN…EDDS), and 627–653 (EKSN…PNEN). A compositionally biased stretch (low complexity) spans 195-213 (SPSPSRSSESNSTTNNNNN). Acidic residues predominate over residues 266–277 (DYDDDDDNDDDN). Low complexity predominate over residues 278-293 (NNNNNNNNNNNNNNNN). Residues 314-330 (ETEKEIENVENKIDNKP) show a composition bias toward basic and acidic residues. Residues 366–381 (IFEEEEEEEEDEDEVG) show a composition bias toward acidic residues.

It belongs to the VPS13 family.

The protein localises to the membrane. In terms of biological role, mediates the transfer of lipids between membranes at organelle contact sites. The chain is Intermembrane lipid transfer protein vps13l (vps13l) from Dictyostelium discoideum (Social amoeba).